A 271-amino-acid polypeptide reads, in one-letter code: Cobalt import ATP-binding protein CbiO (271 aa).

The ABC transporter domain occupies 2–236 (LATSDLWFRY…TEAMEHAGLT (235 aa)). ATP is bound at residue 34–41 (GANGCGKS).

It belongs to the ABC transporter superfamily. Cobalt importer (TC 3.A.1.18.1) family. Forms an energy-coupling factor (ECF) transporter complex composed of an ATP-binding protein (A component, CbiO), a transmembrane protein (T component, CbiQ) and 2 possible substrate-capture proteins (S components, CbiM and CbiN) of unknown stoichimetry.

Its subcellular location is the cell inner membrane. The protein operates within cofactor biosynthesis; adenosylcobalamin biosynthesis. Functionally, part of the energy-coupling factor (ECF) transporter complex CbiMNOQ involved in cobalt import. Presumably responsible for energy coupling to the transport system. The sequence is that of Cobalt import ATP-binding protein CbiO from Salmonella paratyphi A (strain ATCC 9150 / SARB42).